Consider the following 402-residue polypeptide: RNA-binding protein 42 (402 aa).

The segment at 240-275 (ETASDDSVIGPSMPEPEPVHVEPVDTSTEDKKKGKQ) is disordered. The span at 256-275 (EPVHVEPVDTSTEDKKKGKQ) shows a compositional bias: basic and acidic residues. In terms of domain architecture, RRM spans 303–381 (FRIFCGDLGN…RPIKLRKSAW (79 aa)).

The protein belongs to the RRM RBM42 family.

It localises to the nucleus. Its subcellular location is the cytoplasm. May bind RNA. This is RNA-binding protein 42 (rbm42) from Danio rerio (Zebrafish).